A 161-amino-acid chain; its full sequence is Large-conductance mechanosensitive channel (161 aa).

2 helical membrane passes run 14–34 and 85–105; these read VVDMAVGIIVGGAFGSIVNTL and GLFLNALVSFTIMAFSVFILV.

Belongs to the MscL family. As to quaternary structure, homopentamer.

The protein localises to the cell inner membrane. Its function is as follows. Channel that opens in response to stretch forces in the membrane lipid bilayer. May participate in the regulation of osmotic pressure changes within the cell. This chain is Large-conductance mechanosensitive channel, found in Chlorobium luteolum (strain DSM 273 / BCRC 81028 / 2530) (Pelodictyon luteolum).